A 294-amino-acid chain; its full sequence is Bifunctional protein FolD (294 aa).

NADP(+)-binding positions include 169-171, Thr-196, and Val-237; that span reads GRG.

It belongs to the tetrahydrofolate dehydrogenase/cyclohydrolase family. As to quaternary structure, homodimer.

It carries out the reaction (6R)-5,10-methylene-5,6,7,8-tetrahydrofolate + NADP(+) = (6R)-5,10-methenyltetrahydrofolate + NADPH. It catalyses the reaction (6R)-5,10-methenyltetrahydrofolate + H2O = (6R)-10-formyltetrahydrofolate + H(+). It participates in one-carbon metabolism; tetrahydrofolate interconversion. Its function is as follows. Catalyzes the oxidation of 5,10-methylenetetrahydrofolate to 5,10-methenyltetrahydrofolate and then the hydrolysis of 5,10-methenyltetrahydrofolate to 10-formyltetrahydrofolate. This is Bifunctional protein FolD from Renibacterium salmoninarum (strain ATCC 33209 / DSM 20767 / JCM 11484 / NBRC 15589 / NCIMB 2235).